A 289-amino-acid polypeptide reads, in one-letter code: ATP synthase subunit a (289 aa).

6 helical membrane passes run 43-63, 101-121, 160-180, 193-213, 232-252, and 259-279; these read AFHVDTLGWSVALGLIFVLIF, SAVIAPLALTIFVWVFLMNAV, LSVFALIIFYSIKVKGIGGFI, LFVQALLIPVNFLLEFVTLIA, VFILIAVMFGSGLLWLSGLGV, and AVFHILIITLQAFIFMMLTIV.

The protein belongs to the ATPase A chain family. In terms of assembly, F-type ATPases have 2 components, CF(1) - the catalytic core - and CF(0) - the membrane proton channel. CF(1) has five subunits: alpha(3), beta(3), gamma(1), delta(1), epsilon(1). CF(0) has three main subunits: a(1), b(2) and c(9-12). The alpha and beta chains form an alternating ring which encloses part of the gamma chain. CF(1) is attached to CF(0) by a central stalk formed by the gamma and epsilon chains, while a peripheral stalk is formed by the delta and b chains.

It localises to the cell inner membrane. In terms of biological role, key component of the proton channel; it plays a direct role in the translocation of protons across the membrane. The sequence is that of ATP synthase subunit a from Pseudomonas savastanoi pv. phaseolicola (strain 1448A / Race 6) (Pseudomonas syringae pv. phaseolicola (strain 1448A / Race 6)).